A 342-amino-acid chain; its full sequence is Fructose-1,6-bisphosphatase class 1 (342 aa).

The Mg(2+) site is built by glutamate 97, aspartate 119, leucine 121, and aspartate 122. Substrate-binding positions include 122–125 (DGSS), asparagine 215, tyrosine 247, and lysine 280. Glutamate 286 contacts Mg(2+).

The protein belongs to the FBPase class 1 family. In terms of assembly, homotetramer. It depends on Mg(2+) as a cofactor.

The protein resides in the cytoplasm. The enzyme catalyses beta-D-fructose 1,6-bisphosphate + H2O = beta-D-fructose 6-phosphate + phosphate. It functions in the pathway carbohydrate biosynthesis; gluconeogenesis. This chain is Fructose-1,6-bisphosphatase class 1, found in Leptospira borgpetersenii serovar Hardjo-bovis (strain JB197).